A 287-amino-acid chain; its full sequence is Oxaloacetate decarboxylase (287 aa).

Ser50 is a binding site for substrate. Residue Asp88 participates in Mg(2+) binding. Positions 159 and 235 each coordinate substrate.

Belongs to the isocitrate lyase/PEP mutase superfamily. Oxaloacetate decarboxylase family. As to quaternary structure, homotetramer; dimer of dimers. Mg(2+) serves as cofactor.

The enzyme catalyses oxaloacetate + H(+) = pyruvate + CO2. Catalyzes the decarboxylation of oxaloacetate into pyruvate. Seems to play a role in maintaining cellular concentrations of bicarbonate and pyruvate. This Marinomonas sp. (strain MWYL1) protein is Oxaloacetate decarboxylase.